The chain runs to 208 residues: Small ribosomal subunit protein eS8 (208 aa).

The tract at residues Met-1 to Ala-34 is disordered. The span at His-7 to Lys-26 shows a compositional bias: basic residues.

Belongs to the eukaryotic ribosomal protein eS8 family. In terms of assembly, component of the small ribosomal subunit. Identified in a IGF2BP1-dependent mRNP granule complex containing untranslated mRNAs. Part of the small subunit (SSU) processome, composed of more than 70 proteins and the RNA chaperone small nucleolar RNA (snoRNA) U3.

Its subcellular location is the cytoplasm. The protein localises to the membrane. It localises to the nucleus. The protein resides in the nucleolus. Component of the small ribosomal subunit. The ribosome is a large ribonucleoprotein complex responsible for the synthesis of proteins in the cell. Part of the small subunit (SSU) processome, first precursor of the small eukaryotic ribosomal subunit. During the assembly of the SSU processome in the nucleolus, many ribosome biogenesis factors, an RNA chaperone and ribosomal proteins associate with the nascent pre-rRNA and work in concert to generate RNA folding, modifications, rearrangements and cleavage as well as targeted degradation of pre-ribosomal RNA by the RNA exosome. This chain is Small ribosomal subunit protein eS8 (RpS8), found in Spodoptera frugiperda (Fall armyworm).